We begin with the raw amino-acid sequence, 737 residues long: Glycogen [starch] synthase, muscle (737 aa).

Residue S8 is modified to Phosphoserine; by AMPK and PKA. A Phosphoserine modification is found at S11. K39 is a UDP binding site. 2 residues coordinate UDP-alpha-D-glucose: H205 and R211. H291, E292, Q294, H297, and K301 together coordinate alpha-D-glucose 6-phosphate. R331 provides a ligand contact to UDP. Residue R331 coordinates UDP-alpha-D-glucose. Residue S412 is modified to Phosphoserine. H501 is an alpha-D-glucose 6-phosphate binding site. UDP-alpha-D-glucose contacts are provided by E510, W512, and G513. UDP is bound at residue T515. Alpha-D-glucose 6-phosphate-binding residues include R582 and R586. The interval 634-737 (YRYPRPASVP…PTSSLGEERN (104 aa)) is disordered. A phosphoserine mark is found at S641, S645, S649, and S652. A Phosphoserine; by GSK3-alpha and GSK3-beta modification is found at S653. S657 carries the post-translational modification Phosphoserine; by CK2. Over residues 658–681 (EDEEDPRNGPLEEDGERYDEDEEA) the composition is skewed to acidic residues. Over residues 682-695 (AKDRRNIRAPEWPR) the composition is skewed to basic and acidic residues. S698 carries the phosphoserine modification. The span at 698 to 714 (SCTSSTSGSKRNSVDTA) shows a compositional bias: polar residues. Position 700 is a phosphothreonine (T700). At S710 the chain carries Phosphoserine. Positions 715 to 737 (TSSSLSTPSEPLSPTSSLGEERN) are enriched in low complexity. A Phosphothreonine modification is found at T721. 2 positions are modified to phosphoserine: S727 and S731.

Belongs to the glycosyltransferase 3 family. Part of the GYS1-GYG1 complex, a heterooctamer composed of a tetramer of GYS1 and 2 dimers of GYG1, where each GYS1 protomer binds to one GYG1 subunit (via GYG1 C-terminus); the GYS1 tetramer may dissociate from GYG1 dimers to continue glycogen polymerization on its own. In terms of processing, phosphorylation at Ser-8 by AMPK inactivates the enzyme activity. Primed phosphorylation at Ser-657 (site 5) by CSNK2A1 and CSNK2A2 is required for inhibitory phosphorylation at Ser-641 (site 3a), Ser-645 (site 3b), Ser-649 (site 3c) and Ser-653 (site 4) by GSK3A an GSK3B. Phosphorylated at Ser-641 by DYRK2, leading to inactivation. Phosphorylated at Ser-641 by PASK, leading to inactivation; phosphorylation by PASK is inhibited by glycogen. Dephosphorylation at Ser-641 and Ser-645 by PP1 activates the enzyme. In terms of tissue distribution, expressed in skeletal muscle and most other cell types where glycogen is present.

It catalyses the reaction [(1-&gt;4)-alpha-D-glucosyl](n) + UDP-alpha-D-glucose = [(1-&gt;4)-alpha-D-glucosyl](n+1) + UDP + H(+). It participates in glycan biosynthesis; glycogen biosynthesis. Its activity is regulated as follows. Allosteric activation by glucose-6-phosphate. Phosphorylation reduces enzyme activity by constraining a tense conformation of the tetramer through inter-subunit interaction. Phosphorylation reduces the activity towards UDP-glucose. When in the non-phosphorylated state, glycogen synthase does not require glucose-6-phosphate as an allosteric activator; when phosphorylated it does. Its function is as follows. Glycogen synthase participates in the glycogen biosynthetic process along with glycogenin and glycogen branching enzyme. Extends the primer composed of a few glucose units formed by glycogenin by adding new glucose units to it. In this context, glycogen synthase transfers the glycosyl residue from UDP-Glc to the non-reducing end of alpha-1,4-glucan. The protein is Glycogen [starch] synthase, muscle of Homo sapiens (Human).